A 256-amino-acid polypeptide reads, in one-letter code: 5'-nucleotidase SurE (256 aa).

4 residues coordinate a divalent metal cation: Asp-8, Asp-9, Ser-39, and Asn-95.

The protein belongs to the SurE nucleotidase family. Requires a divalent metal cation as cofactor.

The protein localises to the cytoplasm. It carries out the reaction a ribonucleoside 5'-phosphate + H2O = a ribonucleoside + phosphate. Functionally, nucleotidase that shows phosphatase activity on nucleoside 5'-monophosphates. The polypeptide is 5'-nucleotidase SurE (Methanosphaera stadtmanae (strain ATCC 43021 / DSM 3091 / JCM 11832 / MCB-3)).